A 1358-amino-acid chain; its full sequence is MGNQLAGIAPSQILSVESYFSDIHDFEYDKSLGSTRFFKVARAKHREGLVVVKVFAIQDPTLPLTSYKQELEELKIRLHSAQNCLPFQKAAEKASEKAAMLFRQYVRDNLYDRISTRPFLNNIEKRWIAFQILTAVDQAHKSGVRHGDIKTENVMVTSWNWVLLTDFASFKPTYLPEDNPADFNYFFDTSRRRTCYIAPERFVDGGMFATELEYMRDPSTPLVDLNSNQRARGELKRAMDIFSAGCVIAELFTEGVPLFDLSQLLAYRNGHFFPEQVLNKIEDRSIRDLVTQMINREPEKRLEAEDYLKQQRGNAFPEIFYTFLQPYMAQFAKETFLSADERILVIRKDLGNIIHNLCGHDLPEKAEGESRASGLVVLVSVITSCLQTLKSCDSKLAALELILHLAPRLSVEILLDRITPYLLHFSNDSVPRVRAEALRTLTKVLALVQEVPRNDVNIYPEYILPGIAHLAQDDATIVRLAYAENIALLAETALRFLELVQLKTLNMENEPDNEEVDEATRPNGDYDTELQALHEMVQQKVVTLLSDPENIVKQTLMESGITRLCVFFGRQKANDVLLSHMITFLNDKNDWHLRGAFFDSIVGVAAYVGWQSSSILKPLLQQGLSDAEEFVIVKALNALTCMCQLGLLQKPHVYEFASDIAPFLCHPNLWIRYGAVGFITVVAHQISTADVYCKLMPYLDPYITQPVIQIERKLVLLSVLKEPVSRSIFDYALRSKDIASLFRHLHMRQKKRNGSLLDCPPPEDPTIAQLLKKLLSQGMTEEEEDKLLALKDFMMKSNRAKANAVDQSHLHDSSQKGVIDLAALGITGRQVDLVKTKQEPDEKRARKHVKQDSNVNEEWKSMFGSLEPPNIPQALPKTSDHEVVQPGKPPRSESSAGICVPLSTSPQVSEAAHIPSKKPVIPVVSSTVLPSTYQIRITTCKTELQQLIQQKREQCNAERIAKQMMENAEWESKPPPPGWRPKGLLVAHLHEHKSAVNRIRVSDEHLLFATCSNDGTVKIWNSQKMEGKTTTTRSILTYSRIGGRVKTLTFCQGSHYLAIASDNGAVQLLGIEASKLPKSPKIHPLQSRILDQKEDGCVVDMHHFNSGAQSVLAYATVNGSLVGWDLRSSSNAWTLKHDLKSGLITSFAVDIHQCWLCIGTSSGAMACWDMRFQLPISSHCHPSRARIRRLSMHPLYQSWVIAAVQGNNEVSMWDMETGDRRLTLWASSAPPLSELQPSPHSVHGIYCSPADGNPILLTAGSDMKIRFWDLVSPERSYVVAGSTGSPSVSYYKKIIEGTEVVQEIQNKQKVGPSDDTPRRGPESLPVGHHDIITDIATFQTTQGFIVTASRDGIVKVWK.

Glycine 2 carries N-myristoyl glycine lipidation. The Protein kinase domain occupies 26–324 (FEYDKSLGST…AFPEIFYTFL (299 aa)). ATP contacts are provided by residues 32–40 (LGSTRFFKV) and lysine 53. Aspartate 148 serves as the catalytic Proton acceptor. 4 HEAT repeats span residues 413-450 (ILLDRITPYLLHFSNDSVPRVRAEALRTLTKVLALVQE), 458-495 (IYPEYILPGIAHLAQDDATIVRLAYAENIALLAETALR), 572-610 (KANDVLLSHMITFLNDKNDWHLRGAFFDSIVGVAAYVGW), and 612-648 (SSSILKPLLQQGLSDAEEFVIVKALNALTCMCQLGLL). Phosphoserine occurs at positions 808, 813, 853, and 865. WD repeat units lie at residues 991–1030 (EHKSAVNRIRVSDEHLLFATCSNDGTVKIWNSQKMEGKTT), 1040–1079 (RIGGRVKTLTFCQGSHYLAIASDNGAVQLLGIEASKLPKS), 1093–1134 (KEDG…NAWT), 1139–1178 (LKSGLITSFAVDIHQCWLCIGTSSGAMACWDMRFQLPISS), 1182–1223 (PSRA…RRLT), and 1237–1278 (PSPH…RSYV). Positions 1307–1326 (KQKVGPSDDTPRRGPESLPV) are disordered. Residues 1315-1326 (DTPRRGPESLPV) show a composition bias toward basic and acidic residues. Threonine 1316 is modified (phosphothreonine). A WD 7 repeat occupies 1327 to 1358 (GHHDIITDIATFQTTQGFIVTASRDGIVKVWK).

This sequence belongs to the protein kinase superfamily. Ser/Thr protein kinase family. As to quaternary structure, component of the PI3K (PI3KC3/PI3K-III/class III phosphatidylinositol 3-kinase) complex the core of which is composed of the catalytic subunit PIK3C3, the regulatory subunit PIK3R4 and BECN1 associating with additional regulatory/auxiliary subunits to form alternative complex forms. Alternative complex forms containing a fourth regulatory subunit in a mutually exclusive manner are PI3K complex I (PI3KC3-C1) containing ATG14, and PI3K complex II (PI3KC3-C2) containing UVRAG. PI3KC3-C1 displays a V-shaped architecture with PIK3R4 serving as a bridge between PIK3C3 and the ATG14:BECN1 subcomplex. Both, PI3KC3-C1 and PI3KC3-C2, can associate with further regulatory subunits, such as RUBCN, SH3GLB1/Bif-1, AMBRA1 and NRBF2. PI3KC3-C1 probably associates with PIK3CB. Interacts with RAB7A in the presence of PIK3C3/VPS34. Interacts with NRBF2. Interacts with ARMC3. Requires Mn(2+) as cofactor. Myristoylated. In terms of processing, probably autophosphorylated.

The protein localises to the late endosome. The protein resides in the cytoplasmic vesicle. It is found in the autophagosome. Its subcellular location is the membrane. It carries out the reaction L-seryl-[protein] + ATP = O-phospho-L-seryl-[protein] + ADP + H(+). The enzyme catalyses L-threonyl-[protein] + ATP = O-phospho-L-threonyl-[protein] + ADP + H(+). In terms of biological role, regulatory subunit of the PI3K complex that mediates formation of phosphatidylinositol 3-phosphate; different complex forms are believed to play a role in multiple membrane trafficking pathways: PI3KC3-C1 is involved in initiation of autophagosomes and PI3KC3-C2 in maturation of autophagosomes and endocytosis. Involved in regulation of degradative endocytic trafficking and cytokinesis, probably in the context of PI3KC3-C2. This Mus musculus (Mouse) protein is Phosphoinositide 3-kinase regulatory subunit 4 (Pik3r4).